A 324-amino-acid chain; its full sequence is Olfactory receptor 8U3 (324 aa).

Residues 1 to 25 (MAEVNIIYVTVFILKGITNRPELQA) lie on the Extracellular side of the membrane. Residues 26-46 (PCFGVFLVIYLVTVLGNLGLI) traverse the membrane as a helical segment. Residues 47–54 (TLIKIDTR) are Cytoplasmic-facing. Residues 55 to 75 (LHTPMYYFLSHLAFVDLCYSS) form a helical membrane-spanning segment. At 76-99 (AITPKMMVNFVVERNTIPFHACAT) the chain is on the extracellular side. Cys97 and Cys189 are joined by a disulfide. Residues 100 to 120 (QLGCFLTFMITECFLLASMAY) form a helical membrane-spanning segment. Topologically, residues 121-139 (DCYVAICSPLHYSTLMSRR) are cytoplasmic. The chain crosses the membrane as a helical span at residues 140–160 (VCIQLVAVPYIYSFLVALFHT). Topologically, residues 161–196 (VITFRLTYCGPNLINHFYCDDLPFLALSCSDTHMKE) are extracellular. The chain crosses the membrane as a helical span at residues 197 to 217 (ILIFAFAGFDMISSSSIVLTS). The Cytoplasmic portion of the chain corresponds to 218–237 (YIFIIAAILRIRSTQGQHKA). The chain crosses the membrane as a helical span at residues 238–258 (ISTCGSHMVTVTIFYGTLIFM). Residues 259–271 (YLQPKSNHSLDTD) lie on the Extracellular side of the membrane. An N-linked (GlcNAc...) asparagine glycan is attached at Asn265. The chain crosses the membrane as a helical span at residues 272–292 (KMASVFYTVVIPMLNPLIYSL). Residues 293 to 324 (RNKEVKDASKKALDKGCENLQILTFLKIRKLY) lie on the Cytoplasmic side of the membrane.

This sequence belongs to the G-protein coupled receptor 1 family.

It is found in the cell membrane. Its function is as follows. Odorant receptor. This Homo sapiens (Human) protein is Olfactory receptor 8U3.